Consider the following 561-residue polypeptide: MRPSTDTMEADTAATHRNFITKVDVPDHAHYTVAFFVSVIGTLGVTGNALVQFAFYSNKKLRNLPNYFIMNQAASDFLMAFTQSPFFFINCLNREWIFGELGCKLYAFLGALFGITSMINLLAISLDRYMVITRPLEAMKWNSKRRTTIAILLVWLYSLAWSLAPLVGWSSYIPEGLRTSCTWDYVTYTASNRSYTMMLCCFVFFIPLAIISYCYLFMFLAIRKTSRDVERLGIQVRKSTIIRQKSIRTEWKLAKIAFVVIVVYVLSWSPYACVTMISWSGHANILSPYSKTVPAVIAKASTIYNPFIYAIIHQKYRKTLADKVPCLRFLAPNKRKDCTSSSFSGSSYRDSVISRTSTAIRRQSTAASRHASASKTAAGASSYSSSDRVFGDVEMDPIDWRSGASFRRHSSRGSTRRDRLLKKQQMERTNKSAAHKQPSPSTKMSATHCKNKTVSSSVNMAAAPPQLVLIRKRSQSLTNGLSDAGKKTTVANGTPGNHKSKSADLHFRNLPALDQALNVPRIIVISPTSEDCLVKHESSFTDDGSVGTVVDEDSLEDNDVV.

Over 1-34 the chain is Extracellular; sequence MRPSTDTMEADTAATHRNFITKVDVPDHAHYTVA. A helical transmembrane segment spans residues 35 to 55; the sequence is FFVSVIGTLGVTGNALVQFAF. The Cytoplasmic portion of the chain corresponds to 56-68; it reads YSNKKLRNLPNYF. Residues 69 to 89 form a helical membrane-spanning segment; that stretch reads IMNQAASDFLMAFTQSPFFFI. Topologically, residues 90–104 are extracellular; that stretch reads NCLNREWIFGELGCK. A disulfide bridge connects residues Cys-103 and Cys-181. The chain crosses the membrane as a helical span at residues 105-125; the sequence is LYAFLGALFGITSMINLLAIS. The Cytoplasmic portion of the chain corresponds to 126-148; sequence LDRYMVITRPLEAMKWNSKRRTT. A helical transmembrane segment spans residues 149–169; it reads IAILLVWLYSLAWSLAPLVGW. The Extracellular segment spans residues 170–201; the sequence is SSYIPEGLRTSCTWDYVTYTASNRSYTMMLCC. The N-linked (GlcNAc...) asparagine glycan is linked to Asn-192. A helical transmembrane segment spans residues 202 to 222; the sequence is FVFFIPLAIISYCYLFMFLAI. Topologically, residues 223–255 are cytoplasmic; that stretch reads RKTSRDVERLGIQVRKSTIIRQKSIRTEWKLAK. A helical membrane pass occupies residues 256–276; that stretch reads IAFVVIVVYVLSWSPYACVTM. Topologically, residues 277 to 291 are extracellular; that stretch reads ISWSGHANILSPYSK. Residues 292–312 form a helical membrane-spanning segment; the sequence is TVPAVIAKASTIYNPFIYAII. An N6-(retinylidene)lysine modification is found at Lys-299. The Cytoplasmic portion of the chain corresponds to 313 to 561; sequence HQKYRKTLAD…EDSLEDNDVV (249 aa). Disordered stretches follow at residues 359-385, 404-448, 479-503, and 539-561; these read AIRR…SYSS, ASFR…SATH, NGLS…SKSA, and SFTD…NDVV. The span at 371–385 shows a compositional bias: low complexity; the sequence is ASASKTAAGASSYSS. Positions 550 to 561 are enriched in acidic residues; the sequence is VDEDSLEDNDVV.

It belongs to the G-protein coupled receptor 1 family. Opsin subfamily. In terms of tissue distribution, expressed in retina and brain. Expressed in a subset of retinal horizontal cells as well as a small number of amacrine and retinal ganglion cells. Also expressed in a small population of neurons in the suprachiasmatic nucleus (SNC).

The protein localises to the cell membrane. Its function is as follows. Photoreceptor implicated in non-image-forming responses to light. This chain is Melanopsin-A (opn4a), found in Gadus morhua (Atlantic cod).